A 197-amino-acid chain; its full sequence is Mediator of RNA polymerase II transcription subunit 10 (197 aa).

The tract at residues 1–39 (MSSTAGTRRPRQITPTSPSPSPEPQPGATNGSSSTINVA) is disordered. A compositionally biased stretch (polar residues) spans 27–37 (GATNGSSSTIN).

This sequence belongs to the Mediator complex subunit 10 family. As to quaternary structure, component of the Mediator complex.

It is found in the nucleus. Its function is as follows. Component of the Mediator complex, a coactivator involved in the regulated transcription of nearly all RNA polymerase II-dependent genes. Mediator functions as a bridge to convey information from gene-specific regulatory proteins to the basal RNA polymerase II transcription machinery. Mediator is recruited to promoters by direct interactions with regulatory proteins and serves as a scaffold for the assembly of a functional preinitiation complex with RNA polymerase II and the general transcription factors. In Mycosarcoma maydis (Corn smut fungus), this protein is Mediator of RNA polymerase II transcription subunit 10 (NUT2).